We begin with the raw amino-acid sequence, 353 residues long: Aliphatic aldoxime dehydratase (353 aa).

An aliphatic aldoxime is bound at residue Ser-219. His-299 serves as a coordination point for heme b. An an aliphatic aldoxime-binding site is contributed by His-320. His-320 is an active-site residue.

This sequence belongs to the heme-containing dehydratase family. Homodimer. Heme b is required as a cofactor.

It catalyses the reaction an aliphatic aldoxime = a nitrile + H2O. Its activity is regulated as follows. Active when the heme iron is in the ferrous state. Activated by FMN, Fe(2+), Sn(2+), Na(2)SO(3), Na(2)S and vitamin K3. In terms of biological role, catalyzes the dehydration of aldoximes to their corresponding nitrile. Is active toward various arylalkyl- and alkyl-aldoximes, and to a lesser extent toward aryl-aldoximes. The polypeptide is Aliphatic aldoxime dehydratase (Rhodococcus globerulus).